The following is a 128-amino-acid chain: Elongation factor G (128 aa).

The protein belongs to the GTP-binding elongation factor family. EF-G/EF-2 subfamily.

The protein resides in the cytoplasm. Functionally, catalyzes the GTP-dependent ribosomal translocation step during translation elongation. During this step, the ribosome changes from the pre-translocational (PRE) to the post-translocational (POST) state as the newly formed A-site-bound peptidyl-tRNA and P-site-bound deacylated tRNA move to the P and E sites, respectively. Catalyzes the coordinated movement of the two tRNA molecules, the mRNA and conformational changes in the ribosome. The protein is Elongation factor G (fusA) of Planobispora rosea.